We begin with the raw amino-acid sequence, 158 residues long: Protein-export protein SecB (158 aa).

The protein belongs to the SecB family. Homotetramer, a dimer of dimers. One homotetramer interacts with 1 SecA dimer.

It is found in the cytoplasm. One of the proteins required for the normal export of preproteins out of the cell cytoplasm. It is a molecular chaperone that binds to a subset of precursor proteins, maintaining them in a translocation-competent state. It also specifically binds to its receptor SecA. The polypeptide is Protein-export protein SecB (Rhodopseudomonas palustris (strain BisB5)).